Here is a 259-residue protein sequence, read N- to C-terminus: UPF0246 protein PFL_1025 (259 aa).

This sequence belongs to the UPF0246 family.

This chain is UPF0246 protein PFL_1025, found in Pseudomonas fluorescens (strain ATCC BAA-477 / NRRL B-23932 / Pf-5).